The chain runs to 1140 residues: DNA damage-binding protein 1 (1140 aa).

The protein belongs to the DDB1 family. In terms of assembly, component of the UV-DDB complex which includes DDB1 and DDB2; the heterodimer dimerizes to give rise to a heterotetramer when bound to damaged DNA. The UV-DDB complex interacts with monoubiquitinated histone H2A and binds to XPC via the DDB2 subunit. Component of numerous DCX (DDB1-CUL4-X-box) E3 ubiquitin-protein ligase complexes which consist of a core of DDB1, CUL4A or CUL4B and RBX1. DDB1 may recruit specific substrate targeting subunits to the DCX complex. These substrate targeting subunits are generally known as DCAF (DDB1- and CUL4-associated factor) or CDW (CUL4-DDB1-associated WD40-repeat) proteins. Interacts with Fbw5 and gig. May interact with ohgt.

Its subcellular location is the cytoplasm. It localises to the nucleus. Its pathway is protein modification; protein ubiquitination. Functionally, protein, which is both involved in DNA repair and protein ubiquitination, as part of the UV-DDB complex and DCX (DDB1-CUL4-X-box) complexes, respectively. Core component of the UV-DDB complex (UV-damaged DNA-binding protein complex), a complex that recognizes UV-induced DNA damage and recruit proteins of the nucleotide excision repair pathway (the NER pathway) to initiate DNA repair. The UV-DDB complex preferentially binds to cyclobutane pyrimidine dimers (CPD), 6-4 photoproducts (6-4 PP), apurinic sites and short mismatches. Also functions as a component of numerous distinct DCX (DDB1-CUL4-X-box) E3 ubiquitin-protein ligase complexes which mediate the ubiquitination and subsequent proteasomal degradation of target proteins. The functional specificity of the DCX E3 ubiquitin-protein ligase complex is determined by the variable substrate recognition component recruited by DDB1. Required for degradation of gig. Required for genomic stability in the face of endogenous DNA lesions and for the response to MMS-induced DNA damage. Required for normal wing development. This chain is DNA damage-binding protein 1 (pic), found in Drosophila melanogaster (Fruit fly).